Reading from the N-terminus, the 159-residue chain is Late embryogenesis abundant protein 50 (159 aa).

2 SMP domains span residues 30–87 (TTLT…RNQK) and 96–151 (NLGD…YKLN).

Belongs to the LEA type SMP family.

It is found in the cytoplasm. It localises to the nucleus. LEA proteins are late embryonic proteins abundant in higher plant seed embryos. The function of those proteins is not known. The polypeptide is Late embryogenesis abundant protein 50 (Arabidopsis thaliana (Mouse-ear cress)).